The sequence spans 229 residues: Probable septum site-determining protein MinC (229 aa).

It belongs to the MinC family. Interacts with MinD and FtsZ.

In terms of biological role, cell division inhibitor that blocks the formation of polar Z ring septums. Rapidly oscillates between the poles of the cell to destabilize FtsZ filaments that have formed before they mature into polar Z rings. Prevents FtsZ polymerization. The chain is Probable septum site-determining protein MinC from Ruminiclostridium cellulolyticum (strain ATCC 35319 / DSM 5812 / JCM 6584 / H10) (Clostridium cellulolyticum).